We begin with the raw amino-acid sequence, 349 residues long: Hydroxymethylglutaryl-CoA synthase (349 aa).

Residues D29 and A30 each coordinate (3S)-3-hydroxy-3-methylglutaryl-CoA. The active-site Proton donor/acceptor is the E81. The (3S)-3-hydroxy-3-methylglutaryl-CoA site is built by C113 and T154. C113 functions as the Acyl-thioester intermediate in the catalytic mechanism. Residue R202 coordinates CoA. The (3S)-3-hydroxy-3-methylglutaryl-CoA site is built by T204 and H237. H237 serves as the catalytic Proton donor/acceptor. K242 is a binding site for CoA. (3S)-3-hydroxy-3-methylglutaryl-CoA-binding residues include K246, N269, and S299.

This sequence belongs to the thiolase-like superfamily. Archaeal HMG-CoA synthase family. Interacts with acetoacetyl-CoA thiolase that catalyzes the precedent step in the pathway and with a DUF35 protein. The acetoacetyl-CoA thiolase/HMG-CoA synthase complex channels the intermediate via a fused CoA-binding site, which allows for efficient coupling of the endergonic thiolase reaction with the exergonic HMGCS reaction.

The catalysed reaction is acetoacetyl-CoA + acetyl-CoA + H2O = (3S)-3-hydroxy-3-methylglutaryl-CoA + CoA + H(+). It participates in metabolic intermediate biosynthesis; (R)-mevalonate biosynthesis; (R)-mevalonate from acetyl-CoA: step 2/3. Catalyzes the condensation of acetyl-CoA with acetoacetyl-CoA to form 3-hydroxy-3-methylglutaryl-CoA (HMG-CoA). Functions in the mevalonate (MVA) pathway leading to isopentenyl diphosphate (IPP), a key precursor for the biosynthesis of isoprenoid compounds that are building blocks of archaeal membrane lipids. This Methanosarcina mazei (strain ATCC BAA-159 / DSM 3647 / Goe1 / Go1 / JCM 11833 / OCM 88) (Methanosarcina frisia) protein is Hydroxymethylglutaryl-CoA synthase.